The following is a 179-amino-acid chain: Large ribosomal subunit protein uL6 (179 aa).

This sequence belongs to the universal ribosomal protein uL6 family. In terms of assembly, part of the 50S ribosomal subunit.

In terms of biological role, this protein binds to the 23S rRNA, and is important in its secondary structure. It is located near the subunit interface in the base of the L7/L12 stalk, and near the tRNA binding site of the peptidyltransferase center. The protein is Large ribosomal subunit protein uL6 of Kineococcus radiotolerans (strain ATCC BAA-149 / DSM 14245 / SRS30216).